The primary structure comprises 155 residues: Ribosome maturation factor RimP (155 aa).

It belongs to the RimP family.

Its subcellular location is the cytoplasm. Its function is as follows. Required for maturation of 30S ribosomal subunits. The protein is Ribosome maturation factor RimP of Listeria monocytogenes serotype 4b (strain CLIP80459).